Here is a 209-residue protein sequence, read N- to C-terminus: Large ribosomal subunit protein uL3 (209 aa).

A disordered region spans residues 124–156 (KRHNFSGGQRTHGQSDRQRAPGSVGGSSDPSRV).

This sequence belongs to the universal ribosomal protein uL3 family. Part of the 50S ribosomal subunit. Forms a cluster with proteins L14 and L19.

One of the primary rRNA binding proteins, it binds directly near the 3'-end of the 23S rRNA, where it nucleates assembly of the 50S subunit. The protein is Large ribosomal subunit protein uL3 of Pelodictyon phaeoclathratiforme (strain DSM 5477 / BU-1).